An 80-amino-acid chain; its full sequence is D-alanyl carrier protein 2 (80 aa).

The 80-residue stretch at 1–80 folds into the Carrier domain; the sequence is MIMDDVKATV…KIVAKVASLQ (80 aa). Position 38 is an O-(pantetheine 4'-phosphoryl)serine (serine 38).

The protein belongs to the DltC family. Post-translationally, 4'-phosphopantetheine is transferred from CoA to a specific serine of apo-DCP.

Its subcellular location is the cytoplasm. Its pathway is cell wall biogenesis; lipoteichoic acid biosynthesis. In terms of biological role, carrier protein involved in the D-alanylation of lipoteichoic acid (LTA). The loading of thioester-linked D-alanine onto DltC is catalyzed by D-alanine--D-alanyl carrier protein ligase DltA. The DltC-carried D-alanyl group is further transferred to cell membrane phosphatidylglycerol (PG) by forming an ester bond, probably catalyzed by DltD. D-alanylation of LTA plays an important role in modulating the properties of the cell wall in Gram-positive bacteria, influencing the net charge of the cell wall. The chain is D-alanyl carrier protein 2 from Lactiplantibacillus plantarum (strain ATCC BAA-793 / NCIMB 8826 / WCFS1) (Lactobacillus plantarum).